The following is a 607-amino-acid chain: UvrABC system protein C (607 aa).

The GIY-YIG domain occupies 15–93; it reads RKPGVYRMLD…IKELKPPYNI (79 aa). One can recognise a UVR domain in the interval 203-238; sequence REVADQLSTDMEAAAAALEFEKAALLRDQLAAIQAV. Positions 542–551 are enriched in basic residues; it reads HRARRGKARK. The tract at residues 542–561 is disordered; that stretch reads HRARRGKARKQSTLDEIPGI.

This sequence belongs to the UvrC family. In terms of assembly, interacts with UvrB in an incision complex.

The protein localises to the cytoplasm. The UvrABC repair system catalyzes the recognition and processing of DNA lesions. UvrC both incises the 5' and 3' sides of the lesion. The N-terminal half is responsible for the 3' incision and the C-terminal half is responsible for the 5' incision. This Alcanivorax borkumensis (strain ATCC 700651 / DSM 11573 / NCIMB 13689 / SK2) protein is UvrABC system protein C.